A 459-amino-acid polypeptide reads, in one-letter code: Glycosyl hydrolase family 109 protein (459 aa).

The tat-type signal signal peptide spans 1–31 (MHNIHRRNFLKAAGAATAGLVTANIALNAYA). NAD(+) is bound by residues 64 to 65 (ER), Asp-86, 135 to 138 (WEWH), 155 to 156 (EV), and Asn-184. Residues Tyr-213, Arg-232, 244–247 (YPTH), and Tyr-326 each bind substrate. An NAD(+)-binding site is contributed by Tyr-244.

It belongs to the Gfo/Idh/MocA family. Glycosyl hydrolase 109 subfamily. Requires NAD(+) as cofactor. Post-translationally, predicted to be exported by the Tat system. The position of the signal peptide cleavage has not been experimentally proven.

Its function is as follows. Glycosidase. This is Glycosyl hydrolase family 109 protein from Shewanella baltica (strain OS155 / ATCC BAA-1091).